A 157-amino-acid chain; its full sequence is UPF0225 protein PA14_50900 (157 aa).

Belongs to the UPF0225 family.

The protein is UPF0225 protein PA14_50900 of Pseudomonas aeruginosa (strain UCBPP-PA14).